We begin with the raw amino-acid sequence, 118 residues long: Large ribosomal subunit protein bL19 (118 aa).

The protein belongs to the bacterial ribosomal protein bL19 family.

This protein is located at the 30S-50S ribosomal subunit interface and may play a role in the structure and function of the aminoacyl-tRNA binding site. The chain is Large ribosomal subunit protein bL19 from Alcanivorax borkumensis (strain ATCC 700651 / DSM 11573 / NCIMB 13689 / SK2).